Here is a 122-residue protein sequence, read N- to C-terminus: Large ribosomal subunit protein uL14c (122 aa).

This sequence belongs to the universal ribosomal protein uL14 family. As to quaternary structure, part of the 50S ribosomal subunit.

Its subcellular location is the plastid. It is found in the cyanelle. Functionally, binds to 23S rRNA. This Cyanophora paradoxa protein is Large ribosomal subunit protein uL14c.